Reading from the N-terminus, the 368-residue chain is Anhydro-N-acetylmuramic acid kinase (368 aa).

ATP is bound at residue Gly11–Asp18.

This sequence belongs to the anhydro-N-acetylmuramic acid kinase family.

The enzyme catalyses 1,6-anhydro-N-acetyl-beta-muramate + ATP + H2O = N-acetyl-D-muramate 6-phosphate + ADP + H(+). It functions in the pathway amino-sugar metabolism; 1,6-anhydro-N-acetylmuramate degradation. It participates in cell wall biogenesis; peptidoglycan recycling. In terms of biological role, catalyzes the specific phosphorylation of 1,6-anhydro-N-acetylmuramic acid (anhMurNAc) with the simultaneous cleavage of the 1,6-anhydro ring, generating MurNAc-6-P. Is required for the utilization of anhMurNAc either imported from the medium or derived from its own cell wall murein, and thus plays a role in cell wall recycling. The sequence is that of Anhydro-N-acetylmuramic acid kinase from Sulfurimonas denitrificans (strain ATCC 33889 / DSM 1251) (Thiomicrospira denitrificans (strain ATCC 33889 / DSM 1251)).